Reading from the N-terminus, the 673-residue chain is Pesticin receptor (673 aa).

Residues Met1–Ala22 form the signal peptide. A TonB box motif is present at residues Ser30–Ser37. One can recognise a TBDR plug domain in the interval Ser41–Gln155. The region spanning Thr160–Phe672 is the TBDR beta-barrel domain. Residues Gln657–Phe673 carry the TonB C-terminal box motif.

Belongs to the TonB-dependent receptor family.

It localises to the cell outer membrane. In terms of biological role, receptor for the bacteriocin pesticin and for the siderophore yersiniabactin. This chain is Pesticin receptor (fyuA), found in Yersinia pestis.